A 178-amino-acid chain; its full sequence is Translation initiation factor IF-3 (178 aa).

The protein belongs to the IF-3 family. In terms of assembly, monomer.

The protein resides in the cytoplasm. Functionally, IF-3 binds to the 30S ribosomal subunit and shifts the equilibrium between 70S ribosomes and their 50S and 30S subunits in favor of the free subunits, thus enhancing the availability of 30S subunits on which protein synthesis initiation begins. The protein is Translation initiation factor IF-3 of Ureaplasma parvum serovar 3 (strain ATCC 700970).